Reading from the N-terminus, the 981-residue chain is Ubiquitin carboxyl-terminal hydrolase 15 (981 aa).

N-acetylalanine is present on alanine 2. The mediates interaction with SART3 stretch occupies residues alanine 2–glycine 223. A DUSP domain is found at alanine 7–valine 118. The disordered stretch occupies residues glutamate 216–threonine 237. Threonine 226 carries the phosphothreonine modification. Residues threonine 226–threonine 237 are compositionally biased toward polar residues. 2 positions are modified to phosphoserine: serine 229 and serine 242. In terms of domain architecture, USP spans cysteine 289 to glutamine 933. The active-site Nucleophile is the cysteine 298. At threonine 602 the chain carries Phosphothreonine. A disordered region spans residues cysteine 633–leucine 694. Residues methionine 656–serine 673 are compositionally biased toward acidic residues. Residue histidine 891 is the Proton acceptor of the active site. The segment at serine 952–asparagine 981 is disordered. Residues glutamate 960 to asparagine 974 show a composition bias toward acidic residues. Phosphoserine occurs at positions 961 and 965.

Belongs to the peptidase C19 family. In terms of assembly, a homodimer structure has been reported; however it is unclear whether the protein form a homodimer in vivo. Identified in a complex with the COP9 signalosome complex (CSN). Interacts with SMAD1, SMAD2 and SMAD3; the interaction is direct. Forms a complex with SMURF2 and SMAD7. Interacts with TGFBR1. Interacts with SART3; the interaction is direct. May interact with RNF20 and RNF40. May interact with PRKN. Interacts with INCA1. In terms of processing, phosphorylated. Phosphorylation protects against ubiquitination and subsequent degradation by the proteasome. Ubiquitinated, leading to degradation by the proteasome. As to expression, widely expressed with highest levels in the brain and spleen, and lowest levels in the muscles (at protein level). In the midbrain, strong expression in neurons including the dopaminergic neurons (at protein level). Widely expressed with highest levels in testis, heart and liver.

It localises to the cytoplasm. The protein resides in the nucleus. Its subcellular location is the mitochondrion. The catalysed reaction is Thiol-dependent hydrolysis of ester, thioester, amide, peptide and isopeptide bonds formed by the C-terminal Gly of ubiquitin (a 76-residue protein attached to proteins as an intracellular targeting signal).. In terms of biological role, hydrolase that removes conjugated ubiquitin from target proteins and regulates various pathways such as the TGF-beta receptor signaling, NF-kappa-B and RNF41/NRDP1-PRKN pathways. Acts as a key regulator of TGF-beta receptor signaling pathway, but the precise mechanism is still unclear: according to a report, acts by promoting deubiquitination of monoubiquitinated R-SMADs (SMAD1, SMAD2 and/or SMAD3), thereby alleviating inhibition of R-SMADs and promoting activation of TGF-beta target genes. According to another reports, regulates the TGF-beta receptor signaling pathway by mediating deubiquitination and stabilization of TGFBR1, leading to an enhanced TGF-beta signal. Able to mediate deubiquitination of monoubiquitinated substrates, 'Lys-27'-, 'Lys-48'- and 'Lys-63'-linked polyubiquitin chains. May also regulate gene expression and/or DNA repair through the deubiquitination of histone H2B. Acts as an inhibitor of mitophagy by counteracting the action of parkin (PRKN): hydrolyzes cleavage of 'Lys-48'- and 'Lys-63'-linked polyubiquitin chains attached by parkin on target proteins such as MFN2, thereby reducing parkin's ability to drive mitophagy. Acts as an associated component of COP9 signalosome complex (CSN) and regulates different pathways via this association: regulates NF-kappa-B by mediating deubiquitination of NFKBIA and deubiquitinates substrates bound to VCP. Involved in endosome organization by mediating deubiquitination of SQSTM1: ubiquitinated SQSTM1 forms a molecular bridge that restrains cognate vesicles in the perinuclear region and its deubiquitination releases target vesicles for fast transport into the cell periphery. Acts as a negative regulator of antifungal immunity by mediating 'Lys-27'-linked deubiquitination of CARD9, thereby inactivating CARD9. This Mus musculus (Mouse) protein is Ubiquitin carboxyl-terminal hydrolase 15 (Usp15).